Consider the following 538-residue polypeptide: Phosphoenolpyruvate carboxykinase (ATP) (538 aa).

Arginine 64, tyrosine 205, and lysine 211 together coordinate substrate. Residues lysine 211, histidine 230, and 246 to 254 contribute to the ATP site; that span reads GLSGTGKTT. Mn(2+) contacts are provided by lysine 211 and histidine 230. Aspartate 267 is a binding site for Mn(2+). ATP contacts are provided by residues glutamate 295, arginine 331, 447–448, and threonine 453; that span reads RI. Position 331 (arginine 331) interacts with substrate.

The protein belongs to the phosphoenolpyruvate carboxykinase (ATP) family. As to quaternary structure, monomer. Mn(2+) is required as a cofactor.

The protein localises to the cytoplasm. It carries out the reaction oxaloacetate + ATP = phosphoenolpyruvate + ADP + CO2. It participates in carbohydrate biosynthesis; gluconeogenesis. Involved in the gluconeogenesis. Catalyzes the conversion of oxaloacetate (OAA) to phosphoenolpyruvate (PEP) through direct phosphoryl transfer between the nucleoside triphosphate and OAA. This Haemophilus influenzae (strain PittEE) protein is Phosphoenolpyruvate carboxykinase (ATP).